The primary structure comprises 123 residues: UPF0102 protein PSHAa2523 (123 aa).

It belongs to the UPF0102 family.

In Pseudoalteromonas translucida (strain TAC 125), this protein is UPF0102 protein PSHAa2523.